Reading from the N-terminus, the 139-residue chain is Protein cornichon homolog 4 (139 aa).

3 consecutive transmembrane segments (helical) span residues 5–25 (VFVFSLLDCCALIFLSVYFII), 57–77 (LVTVLMLISLHWFIFLLNLPV), and 118–138 (LGFHLLCFFMYLYSMILALIN).

It belongs to the cornichon family. As to quaternary structure, interacts with Sec23/24 complex components SEC24B and SEC24D. Interacts with CCR5. Interacts with ADRB2 in the early secretory pathway.

It is found in the membrane. The protein resides in the endoplasmic reticulum. The protein localises to the endoplasmic reticulum-Golgi intermediate compartment. Involved in G protein-coupled receptors (GPCRs) trafficking from the endoplasmic reticulum to the cell surface; it promotes the exit of GPCRs from the early secretory pathway, likely through interaction with the COPII machinery. This is Protein cornichon homolog 4 (CNIH4) from Bos taurus (Bovine).